A 305-amino-acid polypeptide reads, in one-letter code: tRNA dimethylallyltransferase (305 aa).

Residue 12–19 (GPTASGKT) coordinates ATP. 14-19 (TASGKT) provides a ligand contact to substrate. Interaction with substrate tRNA stretches follow at residues 37–40 (DSAL), 161–165 (QRLAR), and 242–247 (RCVGYR).

The protein belongs to the IPP transferase family. Monomer. Mg(2+) serves as cofactor.

It catalyses the reaction adenosine(37) in tRNA + dimethylallyl diphosphate = N(6)-dimethylallyladenosine(37) in tRNA + diphosphate. Functionally, catalyzes the transfer of a dimethylallyl group onto the adenine at position 37 in tRNAs that read codons beginning with uridine, leading to the formation of N6-(dimethylallyl)adenosine (i(6)A). This Psychromonas ingrahamii (strain DSM 17664 / CCUG 51855 / 37) protein is tRNA dimethylallyltransferase.